A 221-amino-acid polypeptide reads, in one-letter code: N-acetyltransferase 8F1 (221 aa).

The chain crosses the membrane as a helical span at residues 53 to 73 (LVLVSGSWLLAVVCIFFLLLL). An N-acetyltransferase domain is found at 69–219 (FLLLLLRFLA…RTIQLKYPFP (151 aa)).

The protein belongs to the camello family.

It is found in the membrane. Functionally, may play a role in regulation of gastrulation. The protein is N-acetyltransferase 8F1 of Rattus norvegicus (Rat).